A 334-amino-acid chain; its full sequence is MIRMTLDEVRELAVRILRRHAFSEAHVQAVADTLVAGERDECASHGIWRLLGCIATLKAGKVSADAEPELHDIAPGLLRVDAHGGFSQCAFRLGLPHLLEKARSQGIAAMAVNRCVHFSALWVEVEALTEAGLVALATTPSHAWVAPAGGRKPIFGTNPIAFGWPRPDGPPFVFDFATSAVARGEIQLHERAGKPIPLGWGVDEQGEPTTDASAALRGAMLTFGGHKGSALAAMVELLAGPLIGDLTSAESLAYDEGSRSSPYGGELLIAIDPRRMLGASAEEHLARAETLFEGIVEQGARLPSQRRFEARERSARDGVTIPEALHRELLALLE.

Catalysis depends on Ser44, which acts as the Charge relay system. The active-site Proton donor is the His45. Arg49 is a substrate binding site. 117-121 (HFSAL) provides a ligand contact to NADP(+). Substrate is bound at residue Thr157. An NADP(+)-binding site is contributed by 175 to 177 (DFA). Residue 183-184 (RG) coordinates substrate. The active-site Charge relay system is Glu185. NADP(+) is bound by residues 226-227 (HK) and 301-307 (RLPSQRR).

This sequence belongs to the LDH2/MDH2 oxidoreductase family. As to quaternary structure, homodimer.

It carries out the reaction L-pipecolate + NADP(+) = Delta(1)-piperideine-2-carboxylate + NADPH + H(+). The enzyme catalyses L-proline + NADP(+) = 1-pyrroline-2-carboxylate + NADPH + H(+). The catalysed reaction is cis-4-hydroxy-L-proline + NADP(+) = Delta(1)-pyrroline-(4S)-hydroxy-2-carboxylate + NADPH + 2 H(+). Catalyzes the reduction of both Delta(1)-pyrroline-2-carboxylate (Pyr2C) and Delta(1)-piperideine-2-carboxylate (Pip2C) to L-proline and L-pipecolate, respectively, using NADPH as the electron donor. Cannot use NADH instead of NADPH. Is likely involved in a degradation pathway that converts trans-3-hydroxy-L-proline (t3LHyp) to L-proline, which would allow P.aeruginosa to grow on t3LHyp as a sole carbon source. Can also catalyze the reverse oxidation reactions, albeit at a much lower rate. Is also able to use Delta(1)-pyrroline-(4S)-hydroxy-2-carboxylate (Pyr4SH2C) and cis-4-hydroxy-L-proline (c4LHyp) as substrates, and might be involved in the metabolism of c4LHyp, a compound which is generated by the hydroxylation of free L-proline in bacteria. The polypeptide is Delta(1)-pyrroline-2-carboxylate/Delta(1)-piperideine-2-carboxylate reductase (Pseudomonas aeruginosa (strain ATCC 15692 / DSM 22644 / CIP 104116 / JCM 14847 / LMG 12228 / 1C / PRS 101 / PAO1)).